A 458-amino-acid chain; its full sequence is Bifunctional protein GlmU (458 aa).

Residues 1–230 form a pyrophosphorylase region; it reads MLQVDVVILA…DWEVSGVNDK (230 aa). Residues 9–12, K23, Q75, and 80–81 each bind UDP-N-acetyl-alpha-D-glucosamine; these read LAAG and GT. D104 lines the Mg(2+) pocket. The UDP-N-acetyl-alpha-D-glucosamine site is built by G139, E155, N170, and N228. N228 provides a ligand contact to Mg(2+). Residues 231–251 form a linker region; sequence IQLSILERAHQQDTANRLMEQ. The interval 252–458 is N-acetyltransferase; it reads GVMFADPARF…NWKRPRKDRN (207 aa). The UDP-N-acetyl-alpha-D-glucosamine site is built by R334 and K352. H364 acts as the Proton acceptor in catalysis. The UDP-N-acetyl-alpha-D-glucosamine site is built by Y367 and N378. Acetyl-CoA-binding positions include A381, 387–388, S406, A424, and R441; that span reads NY.

The protein in the N-terminal section; belongs to the N-acetylglucosamine-1-phosphate uridyltransferase family. This sequence in the C-terminal section; belongs to the transferase hexapeptide repeat family. In terms of assembly, homotrimer. Mg(2+) is required as a cofactor.

It localises to the cytoplasm. It catalyses the reaction alpha-D-glucosamine 1-phosphate + acetyl-CoA = N-acetyl-alpha-D-glucosamine 1-phosphate + CoA + H(+). The catalysed reaction is N-acetyl-alpha-D-glucosamine 1-phosphate + UTP + H(+) = UDP-N-acetyl-alpha-D-glucosamine + diphosphate. It functions in the pathway nucleotide-sugar biosynthesis; UDP-N-acetyl-alpha-D-glucosamine biosynthesis; N-acetyl-alpha-D-glucosamine 1-phosphate from alpha-D-glucosamine 6-phosphate (route II): step 2/2. Its pathway is nucleotide-sugar biosynthesis; UDP-N-acetyl-alpha-D-glucosamine biosynthesis; UDP-N-acetyl-alpha-D-glucosamine from N-acetyl-alpha-D-glucosamine 1-phosphate: step 1/1. It participates in bacterial outer membrane biogenesis; LPS lipid A biosynthesis. Catalyzes the last two sequential reactions in the de novo biosynthetic pathway for UDP-N-acetylglucosamine (UDP-GlcNAc). The C-terminal domain catalyzes the transfer of acetyl group from acetyl coenzyme A to glucosamine-1-phosphate (GlcN-1-P) to produce N-acetylglucosamine-1-phosphate (GlcNAc-1-P), which is converted into UDP-GlcNAc by the transfer of uridine 5-monophosphate (from uridine 5-triphosphate), a reaction catalyzed by the N-terminal domain. The sequence is that of Bifunctional protein GlmU from Nitrosomonas europaea (strain ATCC 19718 / CIP 103999 / KCTC 2705 / NBRC 14298).